We begin with the raw amino-acid sequence, 451 residues long: MARKHFGTDGIRGRANAAITPELAMKVAQATGVLFQRGEQRHRAVIGKDTRLSGYMIEYAMVAGFTSVGMDVLLLGPMPTPAVAMLTPSMRADVGVMISASHNPYEDNGIKLFGPDGFKLSDEMEAEIEAKLDRDVALKLSKPADLGRAKRVEGAQARYIEFTKRTLTRSLSLEGLRIVIDCANGAGYKVAPEALWELGAEVFAIGTEPDGFNINRDVGSTAPAALVKKVHEVRADIGIALDGDADRVIIVDENGKVIDGDQLMAAIAAGWQEEGRLARPGIVATLMSNLGLERYLESIGLTLARTAVGDRHVLEHMRAHGYNLGGEQSGHIILSDYCTTGDGLVAALQVLALVKRLGKPVSQVCRRFDPVPQILKNVRVNAAQSLEQDHVKRVIEEGHRKLGKNGRLVIRPSGTEPVVRVMGEGDNRDLVETIVDDICEALNAATPLAAE.

The active-site Phosphoserine intermediate is the Ser-101. Mg(2+)-binding residues include Ser-101, Asp-242, Asp-244, and Asp-246. The residue at position 101 (Ser-101) is a Phosphoserine.

Belongs to the phosphohexose mutase family. Mg(2+) serves as cofactor. Post-translationally, activated by phosphorylation.

It catalyses the reaction alpha-D-glucosamine 1-phosphate = D-glucosamine 6-phosphate. Its function is as follows. Catalyzes the conversion of glucosamine-6-phosphate to glucosamine-1-phosphate. The polypeptide is Phosphoglucosamine mutase (Beijerinckia indica subsp. indica (strain ATCC 9039 / DSM 1715 / NCIMB 8712)).